The sequence spans 379 residues: Alanine racemase (379 aa).

Lys-37 (proton acceptor; specific for D-alanine) is an active-site residue. N6-(pyridoxal phosphate)lysine is present on Lys-37. A substrate-binding site is contributed by Arg-139. Residue Tyr-266 is the Proton acceptor; specific for L-alanine of the active site. A substrate-binding site is contributed by Met-314.

The protein belongs to the alanine racemase family. The cofactor is pyridoxal 5'-phosphate.

The enzyme catalyses L-alanine = D-alanine. It functions in the pathway amino-acid biosynthesis; D-alanine biosynthesis; D-alanine from L-alanine: step 1/1. Catalyzes the interconversion of L-alanine and D-alanine. May also act on other amino acids. This chain is Alanine racemase (alr), found in Sorangium cellulosum (strain So ce56) (Polyangium cellulosum (strain So ce56)).